Consider the following 307-residue polypeptide: Porphobilinogen deaminase (307 aa).

Position 241 is an S-(dipyrrolylmethanemethyl)cysteine (C241).

It belongs to the HMBS family. In terms of assembly, monomer. The cofactor is dipyrromethane.

The catalysed reaction is 4 porphobilinogen + H2O = hydroxymethylbilane + 4 NH4(+). The protein operates within porphyrin-containing compound metabolism; protoporphyrin-IX biosynthesis; coproporphyrinogen-III from 5-aminolevulinate: step 2/4. Tetrapolymerization of the monopyrrole PBG into the hydroxymethylbilane pre-uroporphyrinogen in several discrete steps. The sequence is that of Porphobilinogen deaminase from Macrococcus caseolyticus (strain JCSC5402) (Macrococcoides caseolyticum).